The chain runs to 861 residues: DNA mismatch repair protein MutS (861 aa).

618-625 contacts ATP; it reads GPNMGGKS.

Belongs to the DNA mismatch repair MutS family.

In terms of biological role, this protein is involved in the repair of mismatches in DNA. It is possible that it carries out the mismatch recognition step. This protein has a weak ATPase activity. This Shewanella sp. (strain ANA-3) protein is DNA mismatch repair protein MutS.